The chain runs to 475 residues: Cytosolic enolase 3 (475 aa).

N-acetylserine is present on Ser-2. 2 residues coordinate substrate: His-200 and Glu-209. Asp-252 functions as the Proton donor in the catalytic mechanism. Mg(2+) contacts are provided by Asp-287, Glu-336, and Asp-361. Positions 336 and 361 each coordinate substrate. Lys-386 acts as the Proton acceptor in catalysis. Residues 413 to 416 (SHRC) and Lys-437 each bind substrate.

It belongs to the enolase family. In terms of assembly, homodimer. The cofactor is Mg(2+).

It localises to the cytoplasm. Its subcellular location is the nucleus. The catalysed reaction is (2R)-2-phosphoglycerate = phosphoenolpyruvate + H2O. Its pathway is carbohydrate degradation; glycolysis; pyruvate from D-glyceraldehyde 3-phosphate: step 4/5. The polypeptide is Cytosolic enolase 3 (ENO3) (Arabidopsis thaliana (Mouse-ear cress)).